Here is a 104-residue protein sequence, read N- to C-terminus: Large ribosomal subunit protein uL24 (104 aa).

It belongs to the universal ribosomal protein uL24 family. As to quaternary structure, part of the 50S ribosomal subunit.

In terms of biological role, one of two assembly initiator proteins, it binds directly to the 5'-end of the 23S rRNA, where it nucleates assembly of the 50S subunit. Its function is as follows. One of the proteins that surrounds the polypeptide exit tunnel on the outside of the subunit. The sequence is that of Large ribosomal subunit protein uL24 from Caulobacter vibrioides (strain ATCC 19089 / CIP 103742 / CB 15) (Caulobacter crescentus).